A 158-amino-acid polypeptide reads, in one-letter code: Probable flavodoxin 1 (158 aa).

In terms of domain architecture, Flavodoxin-like spans alanine 4–leucine 144.

It belongs to the flavodoxin family. FMN is required as a cofactor.

Functionally, low-potential electron donor to a number of redox enzymes. In Bacillus subtilis (strain 168), this protein is Probable flavodoxin 1 (ykuN).